A 344-amino-acid chain; its full sequence is Biotin synthase (344 aa).

One can recognise a Radical SAM core domain in the interval 40-267; sequence AQVQVSTLLS…KSMVRLSAGR (228 aa). The [4Fe-4S] cluster site is built by C55, C59, and C62. C99, C130, C190, and R262 together coordinate [2Fe-2S] cluster.

This sequence belongs to the radical SAM superfamily. Biotin synthase family. As to quaternary structure, homodimer. Requires [4Fe-4S] cluster as cofactor. The cofactor is [2Fe-2S] cluster.

The enzyme catalyses (4R,5S)-dethiobiotin + (sulfur carrier)-SH + 2 reduced [2Fe-2S]-[ferredoxin] + 2 S-adenosyl-L-methionine = (sulfur carrier)-H + biotin + 2 5'-deoxyadenosine + 2 L-methionine + 2 oxidized [2Fe-2S]-[ferredoxin]. It participates in cofactor biosynthesis; biotin biosynthesis; biotin from 7,8-diaminononanoate: step 2/2. Catalyzes the conversion of dethiobiotin (DTB) to biotin by the insertion of a sulfur atom into dethiobiotin via a radical-based mechanism. This chain is Biotin synthase, found in Xanthomonas euvesicatoria pv. vesicatoria (strain 85-10) (Xanthomonas campestris pv. vesicatoria).